The following is a 105-amino-acid chain: Protein AlbB (105 aa).

Involved in the biosynthesis of albonoursin (cyclo[(alpha,beta-dehydro-Phe)-(alpha,beta-dehydro-Leu)]), an antibacterial peptide. AlbB is essential for cyclic dipeptide oxidase AlbA (CDO) activity. In Streptomyces noursei (Streptomyces albulus), this protein is Protein AlbB (albB).